Consider the following 427-residue polypeptide: Mannosylglucosylglycerate synthase (427 aa).

It belongs to the glycosyltransferase group 1 family. Co(2+) serves as cofactor. The cofactor is Mg(2+). Mn(2+) is required as a cofactor. Requires Ni(2+) as cofactor.

It catalyses the reaction (2R)-2-O-(alpha-D-glucopyranosyl)-glycerate + GDP-alpha-D-mannose = (2R)-2-O-[alpha-D-mannopyranosyl-(1-&gt;2)-alpha-D-glucopyranosyl]-glycerate + GDP + H(+). Its function is as follows. Catalyzes the synthesis of mannosylglucosylglycerate (MGG) from glucosylglycerate (GG) and GDP-mannose. The sequence is that of Mannosylglucosylglycerate synthase from Thermotoga maritima (strain ATCC 43589 / DSM 3109 / JCM 10099 / NBRC 100826 / MSB8).